The primary structure comprises 382 residues: Methenyltetrahydrofolate synthase domain-containing protein (382 aa).

The region spanning Thr-306 to Met-382 is the RRM domain.

The polypeptide is Methenyltetrahydrofolate synthase domain-containing protein (mthfsd) (Danio rerio (Zebrafish)).